Consider the following 918-residue polypeptide: Serine/threonine-protein kinase D1 (918 aa).

Residue Tyr-93 is modified to Phosphotyrosine. The segment at 144–194 adopts a Phorbol-ester/DAG-type 1 zinc-finger fold; that stretch reads PHALFVHSYRAPAFCDHCGEMLWGLVRQGLKCEGCGLNYHKRCAFKIPNNC. A phosphoserine mark is found at Ser-203, Ser-206, Ser-217, and Ser-221. A Phorbol-ester/DAG-type 2 zinc finger spans residues 276–326; it reads PHTFVIHSYTRPTVCQFCKKLLKGLFRQGLQCKDCRFNCHKRCAPKVPNNC. 2 disordered regions span residues 338 to 362 and 379 to 410; these read SPGA…NSGL and AEGQ…SNNI. A compositionally biased stretch (acidic residues) spans 345–355; the sequence is VVMEEGSDDND. Position 351 is a phosphoserine (Ser-351). The span at 400-410 shows a compositional bias: polar residues; it reads RTISPSTSNNI. Ser-403 and Ser-407 each carry phosphoserine; by MAPK13. One can recognise a PH domain in the interval 428–547; sequence TVMKEGWMVH…WEVAIQHALM (120 aa). Tyr-438 bears the Phosphotyrosine mark. A Phosphoserine modification is found at Ser-454. Tyr-469 carries the phosphotyrosine; by ABL modification. Tyr-508 carries the post-translational modification Phosphotyrosine. Position 554 is a phosphoserine (Ser-554). Positions 589-845 constitute a Protein kinase domain; that stretch reads IFPDEVLGSG…VDKTLSHPWL (257 aa). ATP contacts are provided by residues 595–603 and Lys-618; that span reads LGSGQFGIV. Catalysis depends on Asp-712, which acts as the Proton acceptor. Ser-744 carries the post-translational modification Phosphoserine; by PKC/PRKCD. Phosphoserine; by autocatalysis and PKC/PRKCD is present on Ser-748. Phosphotyrosine is present on Tyr-755. Phosphoserine; by autocatalysis is present on Ser-916.

This sequence belongs to the protein kinase superfamily. CAMK Ser/Thr protein kinase family. PKD subfamily. As to quaternary structure, interacts (via N-terminus) with ADAP1/CENTA1. Interacts with MAPK13. Interacts with DAPK1 in an oxidative stress-regulated manner. Interacts with USP28; the interaction induces phosphorylation of USP28 and activated KRAS-mediated stabilization of ZNF304. Interacts with AKAP13 (via C-terminal domain). Mg(2+) is required as a cofactor. Post-translationally, phosphorylated at Ser-403 and Ser-407 by MAPK13 during regulation of insulin secretion in pancreatic beta cells. Phosphorylated by DAPK1. Phosphorylated at Tyr-93 and by ABL at Tyr-469, which primes the kinase in response to oxidative stress, and promotes a second step activating phosphorylation at Ser-744/Ser-748 by PKRD. Phosphorylated at Ser-916 upon S.enterica infection in macrophages.

It localises to the cytoplasm. It is found in the cell membrane. Its subcellular location is the golgi apparatus. The protein resides in the trans-Golgi network. The catalysed reaction is L-seryl-[protein] + ATP = O-phospho-L-seryl-[protein] + ADP + H(+). It catalyses the reaction L-threonyl-[protein] + ATP = O-phospho-L-threonyl-[protein] + ADP + H(+). Activated by DAG and phorbol esters. Phorbol-ester/DAG-type domain 1 binds DAG with high affinity and appears to play the dominant role in mediating translocation to the cell membrane and trans-Golgi network. Phorbol-ester/DAG-type domain 2 binds phorbol ester with higher affinity. Autophosphorylation of Ser-748 and phosphorylation of Ser-744 by PKC relieves auto-inhibition by the PH domain. Phosphorylation on Tyr-469 by the SRC-ABL1 pathway in response to oxidative stress, is also required for activation. Activated by DAPK1 under oxidative stress. Functionally, serine/threonine-protein kinase that converts transient diacylglycerol (DAG) signals into prolonged physiological effects downstream of PKC, and is involved in the regulation of MAPK8/JNK1 and Ras signaling, Golgi membrane integrity and trafficking, cell survival through NF-kappa-B activation, cell migration, cell differentiation by mediating HDAC7 nuclear export, cell proliferation via MAPK1/3 (ERK1/2) signaling, and plays a role in cardiac hypertrophy, VEGFA-induced angiogenesis, genotoxic-induced apoptosis and flagellin-stimulated inflammatory response. Phosphorylates the epidermal growth factor receptor (EGFR) on dual threonine residues, which leads to the suppression of epidermal growth factor (EGF)-induced MAPK8/JNK1 activation and subsequent JUN phosphorylation. Phosphorylates RIN1, inducing RIN1 binding to 14-3-3 proteins YWHAB, YWHAE and YWHAZ and increased competition with RAF1 for binding to GTP-bound form of Ras proteins (NRAS, HRAS and KRAS). Acts downstream of the heterotrimeric G-protein beta/gamma-subunit complex to maintain the structural integrity of the Golgi membranes, and is required for protein transport along the secretory pathway. In the trans-Golgi network (TGN), regulates the fission of transport vesicles that are on their way to the plasma membrane. May act by activating the lipid kinase phosphatidylinositol 4-kinase beta (PI4KB) at the TGN for the local synthesis of phosphorylated inositol lipids, which induces a sequential production of DAG, phosphatidic acid (PA) and lyso-PA (LPA) that are necessary for membrane fission and generation of specific transport carriers to the cell surface. Under oxidative stress, is phosphorylated at Tyr-469 via SRC-ABL1 and contributes to cell survival by activating IKK complex and subsequent nuclear translocation and activation of NFKB1. Involved in cell migration by regulating integrin alpha-5/beta-3 recycling and promoting its recruitment in newly forming focal adhesion. In osteoblast differentiation, mediates the bone morphogenetic protein 2 (BMP2)-induced nuclear export of HDAC7, which results in the inhibition of HDAC7 transcriptional repression of RUNX2. In neurons, plays an important role in neuronal polarity by regulating the biogenesis of TGN-derived dendritic vesicles, and is involved in the maintenance of dendritic arborization and Golgi structure in hippocampal cells. May potentiate mitogenesis induced by the neuropeptide bombesin or vasopressin by mediating an increase in the duration of MAPK1/3 (ERK1/2) signaling, which leads to accumulation of immediate-early gene products including FOS that stimulate cell cycle progression. Plays an important role in the proliferative response induced by low calcium in keratinocytes, through sustained activation of MAPK1/3 (ERK1/2) pathway. Downstream of novel PKC signaling, plays a role in cardiac hypertrophy by phosphorylating HDAC5, which in turn triggers XPO1/CRM1-dependent nuclear export of HDAC5, MEF2A transcriptional activation and induction of downstream target genes that promote myocyte hypertrophy and pathological cardiac remodeling. Mediates cardiac troponin I (TNNI3) phosphorylation at the PKA sites, which results in reduced myofilament calcium sensitivity, and accelerated crossbridge cycling kinetics. The PRKD1-HDAC5 pathway is also involved in angiogenesis by mediating VEGFA-induced specific subset of gene expression, cell migration, and tube formation. In response to VEGFA, is necessary and required for HDAC7 phosphorylation which induces HDAC7 nuclear export and endothelial cell proliferation and migration. During apoptosis induced by cytarabine and other genotoxic agents, PRKD1 is cleaved by caspase-3 at Asp-378, resulting in activation of its kinase function and increased sensitivity of cells to the cytotoxic effects of genotoxic agents. In epithelial cells, is required for transducing flagellin-stimulated inflammatory responses by binding and phosphorylating TLR5, which contributes to MAPK14/p38 activation and production of inflammatory cytokines. Acts as an activator of NLRP3 inflammasome assembly by mediating phosphorylation of NLRP3. May play a role in inflammatory response by mediating activation of NF-kappa-B. May be involved in pain transmission by directly modulating TRPV1 receptor. Plays a role in activated KRAS-mediated stabilization of ZNF304 in colorectal cancer (CRC) cells. Regulates nuclear translocation of transcription factor TFEB in macrophages upon live S.enterica infection. This Mus musculus (Mouse) protein is Serine/threonine-protein kinase D1 (Prkd1).